Consider the following 115-residue polypeptide: NADH-ubiquinone oxidoreductase chain 3 (115 aa).

Helical transmembrane passes span Leu4 to Leu24, Phe55 to Ile75, and Ile84 to Tyr104.

The protein belongs to the complex I subunit 3 family. In terms of assembly, core subunit of respiratory chain NADH dehydrogenase (Complex I) which is composed of 45 different subunits. Interacts with TMEM186. Interacts with TMEM242.

It is found in the mitochondrion inner membrane. It carries out the reaction a ubiquinone + NADH + 5 H(+)(in) = a ubiquinol + NAD(+) + 4 H(+)(out). Functionally, core subunit of the mitochondrial membrane respiratory chain NADH dehydrogenase (Complex I) which catalyzes electron transfer from NADH through the respiratory chain, using ubiquinone as an electron acceptor. Essential for the catalytic activity of complex I. This Ochrotomys nuttalli (Golden mouse) protein is NADH-ubiquinone oxidoreductase chain 3.